We begin with the raw amino-acid sequence, 96 residues long: Large ribosomal subunit protein bL28 (96 aa).

This sequence belongs to the bacterial ribosomal protein bL28 family.

The sequence is that of Large ribosomal subunit protein bL28 from Methylobacterium sp. (strain 4-46).